The primary structure comprises 242 residues: Biosynthetic peptidoglycan transglycosylase (242 aa).

The chain crosses the membrane as a helical span at residues 19–39 (LMVVLAVFWGGGIALFSVAPV).

This sequence belongs to the glycosyltransferase 51 family.

It localises to the cell inner membrane. It carries out the reaction [GlcNAc-(1-&gt;4)-Mur2Ac(oyl-L-Ala-gamma-D-Glu-L-Lys-D-Ala-D-Ala)](n)-di-trans,octa-cis-undecaprenyl diphosphate + beta-D-GlcNAc-(1-&gt;4)-Mur2Ac(oyl-L-Ala-gamma-D-Glu-L-Lys-D-Ala-D-Ala)-di-trans,octa-cis-undecaprenyl diphosphate = [GlcNAc-(1-&gt;4)-Mur2Ac(oyl-L-Ala-gamma-D-Glu-L-Lys-D-Ala-D-Ala)](n+1)-di-trans,octa-cis-undecaprenyl diphosphate + di-trans,octa-cis-undecaprenyl diphosphate + H(+). Its pathway is cell wall biogenesis; peptidoglycan biosynthesis. Its function is as follows. Peptidoglycan polymerase that catalyzes glycan chain elongation from lipid-linked precursors. This Escherichia coli O17:K52:H18 (strain UMN026 / ExPEC) protein is Biosynthetic peptidoglycan transglycosylase.